The chain runs to 1199 residues: Ecdysone-induced protein 75B, isoforms C/D (1199 aa).

The interval 130-182 is disordered; it reads TTDGPTAVLQQQQPQQQMPQHFESLPHHHPQQEHQPQQQQQQHHLQHHPHPHV. Composition is skewed to low complexity over residues 139-149 and 162-172; these read QQQQPQQQMPQ and EHQPQQQQQQH. A DNA-binding region (nuclear receptor) is located at residues 242–318; that stretch reads TVLCRVCGDK…VGMSRDAVRF (77 aa). 2 consecutive NR C4-type zinc fingers follow at residues 245–265 and 282–306; these read CRVC…CEGC and CTKN…LKKC. The 249-residue stretch at 352–600 folds into the NR LBD domain; the sequence is DQPRLLAAVL…QQMWSMEDGN (249 aa). Disordered stretches follow at residues 624–665, 771–808, 831–851, 895–961, 991–1104, and 1155–1188; these read KSPL…SALA, LDSP…SVDD, VSVS…KRQI, AEAD…SSHS, ENST…SNSA, and VTVT…NPGL. Low complexity-rich tracts occupy residues 641-653, 792-804, 831-845, 897-942, and 950-961; these read GSPS…GVSL, SSGG…SPRS, VSVS…STSS, ADAS…AQSQ, and SSPKASMASSHS. 2 stretches are compositionally biased toward polar residues: residues 993 to 1006 and 1018 to 1040; these read STAA…VGNR and AVQN…QRQQ. Composition is skewed to low complexity over residues 1041–1077, 1086–1104, and 1159–1187; these read SVSP…SASS, STSN…SNSA, and ASNG…PNPG.

Belongs to the nuclear hormone receptor family. NR1 subfamily.

It is found in the nucleus. Its function is as follows. Implicated in the regulation of ecdysone-triggered gene hierarchies. Probably plays a key role in mediating the regulation of the larval molt by 20-OH-ecdysone. In Drosophila melanogaster (Fruit fly), this protein is Ecdysone-induced protein 75B, isoforms C/D (Eip75B).